The chain runs to 329 residues: tRNA (guanine(10)-N2)-dimethyltransferase (329 aa).

In terms of domain architecture, THUMP spans 40–143; it reads NVENVEIFER…KLWIGIRIRE (104 aa).

The protein belongs to the methyltransferase superfamily. Trm-G10 family. As to quaternary structure, monomer.

It localises to the cytoplasm. It catalyses the reaction guanosine(10) in tRNA + 2 S-adenosyl-L-methionine = N(2)-dimethylguanosine(10) in tRNA + 2 S-adenosyl-L-homocysteine + 2 H(+). In terms of biological role, catalyzes the adenosylmethionine-dependent methylation of the exocyclic amino group (N(2)) of guanosine at position 10 of various tRNAs. Acts via a two-step process that leads to the formation of either N(2)-monomethyl (m(2)G) or N(2)-dimethylguanosine (m(2)(2)G). The sequence is that of tRNA (guanine(10)-N2)-dimethyltransferase (trmG10) from Pyrococcus abyssi (strain GE5 / Orsay).